Reading from the N-terminus, the 43-residue chain is Neurotrophin-4 (43 aa).

This sequence belongs to the NGF-beta family.

Functionally, NT-4 could play a role in oogenesis and/or early embryogenesis. NT-4 interacts with the low affinity NGF receptor and elicits neurite outgrowth from explanted dorsal root ganglia with no and lower activity in sympathetic and nodose ganglia, respectively. The protein is Neurotrophin-4 (NTF4) of Macrovipera lebetinus (Levantine viper).